The following is a 500-amino-acid chain: Toluene-4-monooxygenase system, hydroxylase component subunit alpha (500 aa).

Glutamate 104, glutamate 134, histidine 137, glutamate 197, glutamate 231, and histidine 234 together coordinate Fe cation.

The protein belongs to the TmoA/XamoA family. As to quaternary structure, the alkene monooxygenase multicomponent enzyme system is composed of an electron transfer component and a monooxygenase component interacting with the effector protein TmoD. The electron transfer component is composed of a ferredoxin reductase (TmoF) and a ferredoxin (TmoC), and the monooxygenase component is formed by a heterohexamer (dimer of heterotrimers) of two alpha subunits (TmoA), two beta subunits (TmoE) and two gamma subunits (TmoB). It depends on Fe(2+) as a cofactor.

It catalyses the reaction toluene + NADH + O2 + H(+) = 4-methylphenol + NAD(+) + H2O. It participates in xenobiotic degradation; toluene degradation. With respect to regulation, inhibited by Zn(2+) and Cu(2+). Its function is as follows. Component of the toluene-4-monooxygenase multicomponent enzyme system which catalyzes the O2- and NADH-dependent hydroxylation of toluene to form p-cresol. Also able to convert benzene to phenol, catechol, and 1,2,3-trihydroxybenzene by successive hydroxylations. The chain is Toluene-4-monooxygenase system, hydroxylase component subunit alpha from Ectopseudomonas mendocina (Pseudomonas mendocina).